A 904-amino-acid chain; its full sequence is Disks large homolog 1 (904 aa).

One can recognise an L27 domain in the interval 4-64 (RKQDTQRALH…FYEVTLLDNP (61 aa)). Threonine 115 is modified (phosphothreonine). A phosphoserine mark is found at serine 122, serine 138, and serine 158. Residues 162–212 (PTEAVLPSPPTVPVIPVLPVPAENTVILPTIPQANPPPVLVNTDSLETPTY) are interaction with SH3 domains. PDZ domains lie at 224–310 (EITL…VKRR), 319–405 (EIKL…VAKP), and 466–546 (KVVL…AQYR). The interval 224 to 546 (EITLERGNSG…QAVTIVAQYR (323 aa)) is required for interaction with MARCHF2. The residue at position 232 (serine 232) is a Phosphoserine. The residue at position 399 (tyrosine 399) is a Phosphotyrosine. 11 positions are modified to phosphoserine: serine 568, serine 573, serine 575, serine 579, serine 598, serine 619, serine 676, serine 684, serine 687, glutamine 709, and serine 834. The 71-residue stretch at 581-651 (KRSLYVRALF…PSKRRVEKKE (71 aa)) folds into the SH3 domain. Residues 662–693 (SKTRDKGEIPDDMGSKGLKHVTSNASDSESSY) are disordered. The segment covering 682-693 (VTSNASDSESSY) has biased composition (polar residues). The region spanning 714-889 (TRPVIILGPM…IYNQVKQIIE (176 aa)) is the Guanylate kinase-like domain.

Belongs to the MAGUK family. As to quaternary structure, homotetramer. Interacts (via guanylate kinase-like domain) with DLGAP1, DLGAP2, DLGAP3, DLGAP4 and MAP1A. Interacts (via guanylate kinase-like domain) with KIF13B. May interact with HTR2A. Interacts (via PDZ domains) with GRIA1. Interacts (via PDZ domains) with GRIN2A. Interacts (via PDZ domains) with KCND2 and KCND3. Interacts (via PDZ domains) with KCNA1, KCNA2, KCNA3 and KCNA4. Interacts (via PDZ domains) with ADGRA3. Interacts with KCNF1. Interacts with CAMK2. Interacts with cytoskeleton-associated protein EPB41. Interacts with cytoskeleton-associated protein EZR. Found in a complex with KCNA5 and CAV3. Found in a complex with APC and CTNNB1. Interacts (via PDZ domains) with APC. Interacts with CDH1 through binding to PIK3R1. Forms multiprotein complexes with CASK, LIN7A, LIN7B, LIN7C, APBA1, and KCNJ12. Interacts with TOPK. Forms a tripartite complex composed of DLG1, MPP7 and LIN7 (LIN7A or LIN7C). May interact with TJAP1. Interacts with PTEN. Interacts with FRMPD4 (via C-terminus). Interacts with LRFN1, LRFN2 and LRFN4. Interacts with SFPQ. Interacts (via PDZ domains) with ADGRA2 (via PDZ-binding motif). Interacts with ADAM10; this interaction recruits ADAM10 to the cell membrane during long-term depression in hippocampal neurons. Interacts with DGKI (via PDZ-binding motif). Interacts (via PDZ domains) with MARCHF2 (via PDZ domain); the interaction leads to DLG1 ubiqtuitination and degradation. Interacts (via N-terminus) with MPP3; this interaction connects CADM1 with DLG1 and links CADM1 with the regulatory subunit of phosphoinositide-3-kinase (PI3K) by forming a multiprotein complex and participates in cell spreading. (Microbial infection) Interacts with HTLV-1 protein Tax. In terms of assembly, (Microbial infection) Interacts (via PDZ domains 1 and 2) with influenza A virus protein NS1; the interaction results in the translocation of DLG1 from the cell membrane to perinuclear puncta. Acts as a scaffold protein to facilitate the interaction between LIN7C and influenza A virus protein NS1; the interaction facilitates translocation of LIN7C to cytoplasmic puncta. As to quaternary structure, (Microbial infection) Interacts with human papillomavirus 18/HPV-18 protein E6. Phosphorylated by MAPK12. Phosphorylation of Ser-232 regulates association with GRIN2A. In terms of processing, ubiquitinated; by MARCHF2 which results in its degradation. In terms of tissue distribution, abundantly expressed in atrial myocardium (at protein level). Expressed in lung fibroblasts, cervical epithelial and B-cells (at protein level). Expressed in the brain (at protein level). Widely expressed, with isoforms displaying different expression profiles.

The protein resides in the cell membrane. It localises to the basolateral cell membrane. Its subcellular location is the endoplasmic reticulum membrane. The protein localises to the postsynaptic density. It is found in the synapse. The protein resides in the sarcolemma. It localises to the apical cell membrane. Its subcellular location is the cell junction. The protein localises to the cytoplasm. Essential multidomain scaffolding protein required for normal development. Recruits channels, receptors and signaling molecules to discrete plasma membrane domains in polarized cells. Promotes epithelial cell layer barrier function via maintaining cell-cell adhesion. May also play a role in adherens junction assembly, signal transduction, cell proliferation, synaptogenesis and lymphocyte activation. Regulates the excitability of cardiac myocytes by modulating the functional expression of Kv4 channels. Functional regulator of Kv1.5 channel. During long-term depression in hippocampal neurons, it recruits ADAM10 to the plasma membrane. The polypeptide is Disks large homolog 1 (Homo sapiens (Human)).